A 105-amino-acid chain; its full sequence is MTTEKIDGVSVTTQANVYFDGKCVSHNLTYPDGTKKSVGVVLPATLTFGTGAPEIMECVGGSCEYQLDGTDAWVKVGAGEKFSVPGNSKFNIRVTEAFHYICHYG.

The protein belongs to the nucleoside phosphorylase PpnP family.

It catalyses the reaction a purine D-ribonucleoside + phosphate = a purine nucleobase + alpha-D-ribose 1-phosphate. It carries out the reaction adenosine + phosphate = alpha-D-ribose 1-phosphate + adenine. The enzyme catalyses cytidine + phosphate = cytosine + alpha-D-ribose 1-phosphate. The catalysed reaction is guanosine + phosphate = alpha-D-ribose 1-phosphate + guanine. It catalyses the reaction inosine + phosphate = alpha-D-ribose 1-phosphate + hypoxanthine. It carries out the reaction thymidine + phosphate = 2-deoxy-alpha-D-ribose 1-phosphate + thymine. The enzyme catalyses uridine + phosphate = alpha-D-ribose 1-phosphate + uracil. The catalysed reaction is xanthosine + phosphate = alpha-D-ribose 1-phosphate + xanthine. In terms of biological role, catalyzes the phosphorolysis of diverse nucleosides, yielding D-ribose 1-phosphate and the respective free bases. Can use uridine, adenosine, guanosine, cytidine, thymidine, inosine and xanthosine as substrates. Also catalyzes the reverse reactions. This Acidovorax ebreus (strain TPSY) (Diaphorobacter sp. (strain TPSY)) protein is Pyrimidine/purine nucleoside phosphorylase.